Here is a 245-residue protein sequence, read N- to C-terminus: Probable phosphatase PC1_1798 (245 aa).

Positions 7, 9, 15, 40, 73, 101, 131, 192, and 194 each coordinate Zn(2+).

Belongs to the PHP family. In terms of assembly, homotrimer. The cofactor is Zn(2+).

This Pectobacterium carotovorum subsp. carotovorum (strain PC1) protein is Probable phosphatase PC1_1798.